A 243-amino-acid polypeptide reads, in one-letter code: Derlin-1.1 (243 aa).

The Cytoplasmic portion of the chain corresponds to 1–20 (MSSPAEYYKSLPPISKAYGT). A helical membrane pass occupies residues 21-41 (LCFFTTVLVQLQILHPLFLYL). Over 42-55 (DYPLVFKKFEIWRL) the chain is Lumenal. The helical transmembrane segment at 56–76 (LTSFFFLAPFSMKFGIRLLMI) threads the bilayer. At 77–94 (ARYGVMLEKGAFDKRTAD) the chain is on the cytoplasmic side. A helical transmembrane segment spans residues 95–115 (FLWMMIFGAISLLVLSIIPLF). At 116–157 (NSFFLGIPMVSMLLYVWSRENPNAQINIYGLVQLRSFYLPWA) the chain is on the lumenal side. Residues 158–178 (MLLLDVIFGSSLMPGLLGIMV) traverse the membrane as a helical segment. Residues 179–243 (GHLYYFFAVL…FRGRSYRLNQ (65 aa)) lie on the Cytoplasmic side of the membrane. The interval 219-243 (SPVRPPANGNSGSGVFRGRSYRLNQ) is disordered.

Belongs to the derlin family. Expressed in roots, stalks, leaves, immature ears, embryo and endosperm.

It is found in the endoplasmic reticulum membrane. Its function is as follows. May be involved in the degradation process of specific misfolded endoplasmic reticulum (ER) luminal proteins. The sequence is that of Derlin-1.1 (DER1.1) from Zea mays (Maize).